The primary structure comprises 102 residues: ATP-dependent Clp protease adapter protein ClpS (102 aa).

The protein belongs to the ClpS family. Binds to the N-terminal domain of the chaperone ClpA.

In terms of biological role, involved in the modulation of the specificity of the ClpAP-mediated ATP-dependent protein degradation. In Janthinobacterium sp. (strain Marseille) (Minibacterium massiliensis), this protein is ATP-dependent Clp protease adapter protein ClpS.